Reading from the N-terminus, the 126-residue chain is Cornifin alpha (126 aa).

Ser2 carries the N-acetylserine modification. A run of 13 repeats spans residues 3–14, 18–29, 31–38, 39–46, 47–54, 55–62, 63–70, 71–78, 79–86, 87–94, 95–102, 103–110, and 111–118. Residues 3–29 are 2 X 12 AA approximate repeats; it reads SQQQKQPCTLPPQLQQHQVKQPCQPPP. Positions 20 to 43 are disordered; that stretch reads QVKQPCQPPPQEPCVPKTKEPCQP. The tract at residues 31 to 122 is 11 X 8 AA approximate tandem repeats; that stretch reads EPCVPKTKEP…CQPKVPEPCQ (92 aa). The segment at 104 to 126 is disordered; it reads PCQSKVPQPCQPKVPEPCQTKQK.

The protein belongs to the cornifin (SPRR) family. As to expression, suprabasal layers of squamous-differentiated tissues such as epidermis, esophagus, tongue and trachea.

Its subcellular location is the cytoplasm. Functionally, cross-linked envelope protein of keratinocytes. It is a keratinocyte protein that first appears in the cell cytosol, but ultimately becomes cross-linked to membrane proteins by transglutaminase. All that results in the formation of an insoluble envelope beneath the plasma membrane. The chain is Cornifin alpha from Oryctolagus cuniculus (Rabbit).